The primary structure comprises 179 residues: Small ribosomal subunit protein eS10x (179 aa).

The segment at Thr-90–Pro-179 is disordered. Over residues Asp-108–Tyr-129 the composition is skewed to basic and acidic residues. The segment covering Arg-134–Gly-144 has biased composition (gly residues). Residues Gly-145 to Gly-156 show a composition bias toward low complexity. The segment covering Ser-157–Gly-167 has biased composition (gly residues). The segment covering Tyr-168 to Pro-179 has biased composition (low complexity).

The protein belongs to the eukaryotic ribosomal protein eS10 family.

The protein resides in the cytoplasm. In Arabidopsis thaliana (Mouse-ear cress), this protein is Small ribosomal subunit protein eS10x (RPS10C).